A 234-amino-acid polypeptide reads, in one-letter code: (5-formylfuran-3-yl)methyl phosphate synthase (234 aa).

Catalysis depends on lysine 27, which acts as the Schiff-base intermediate with substrate. Lysine 85 (proton acceptor) is an active-site residue.

It belongs to the MfnB family.

It carries out the reaction 2 D-glyceraldehyde 3-phosphate = 4-(hydroxymethyl)-2-furancarboxaldehyde phosphate + phosphate + 2 H2O. It functions in the pathway cofactor biosynthesis; methanofuran biosynthesis. In terms of biological role, catalyzes the formation of 4-(hydroxymethyl)-2-furancarboxaldehyde phosphate (4-HFC-P) from two molecules of glyceraldehyde-3-P (GA-3-P). This chain is (5-formylfuran-3-yl)methyl phosphate synthase, found in Methanosarcina mazei (strain ATCC BAA-159 / DSM 3647 / Goe1 / Go1 / JCM 11833 / OCM 88) (Methanosarcina frisia).